Consider the following 328-residue polypeptide: Ribosomal RNA small subunit methyltransferase H (328 aa).

Residues 37 to 39, D57, F83, D104, and Q111 contribute to the S-adenosyl-L-methionine site; that span reads GGH.

The protein belongs to the methyltransferase superfamily. RsmH family.

It is found in the cytoplasm. It carries out the reaction cytidine(1402) in 16S rRNA + S-adenosyl-L-methionine = N(4)-methylcytidine(1402) in 16S rRNA + S-adenosyl-L-homocysteine + H(+). In terms of biological role, specifically methylates the N4 position of cytidine in position 1402 (C1402) of 16S rRNA. The chain is Ribosomal RNA small subunit methyltransferase H from Neisseria meningitidis serogroup C / serotype 2a (strain ATCC 700532 / DSM 15464 / FAM18).